The chain runs to 466 residues: Cysteine--tRNA ligase (466 aa).

Residue Cys28 coordinates Zn(2+). The 'HIGH' region motif lies at 30-40 (PTVYNYIHIGN). 3 residues coordinate Zn(2+): Cys208, His233, and Glu237. Residues 265-269 (KMSKS) carry the 'KMSKS' region motif. ATP is bound at residue Lys268.

Belongs to the class-I aminoacyl-tRNA synthetase family. In terms of assembly, monomer. Zn(2+) serves as cofactor.

It is found in the cytoplasm. The catalysed reaction is tRNA(Cys) + L-cysteine + ATP = L-cysteinyl-tRNA(Cys) + AMP + diphosphate. This chain is Cysteine--tRNA ligase, found in Staphylococcus carnosus (strain TM300).